The chain runs to 388 residues: Glycoprotein-N-acetylgalactosamine 3-beta-galactosyltransferase 1 (388 aa).

Over 1–12 (MAPISHYIGKTS) the chain is Cytoplasmic. The helical; Signal-anchor for type II membrane protein transmembrane segment at 13–30 (LTTLAIGIAIGITVSNIV) threads the bilayer. Topologically, residues 31-388 (KFSSTQRRHF…LAQTDSKHIS (358 aa)) are lumenal. The interval 43-65 (SGYIPDSPHSHGENDFVEGPDDS) is disordered. An N-linked (GlcNAc...) asparagine glycan is attached at Asn80. Cysteines 95 and 119 form a disulfide. The UDP site is built by Met98, Asn100, Glu142, Gly143, Arg144, Lys150, and Asp173. Mn(2+)-binding residues include Asp173 and Asp175. Residues Cys238 and Cys253 are joined by a disulfide bond. Trp292 provides a ligand contact to a glycoprotein. Cysteines 307 and 308 form a disulfide. UDP is bound by residues His316 and Tyr317. Position 316 (His316) interacts with Mn(2+). The tract at residues 344–388 (STEEQDHGSSHKDTDAMKPEGKGMEDKEDEETNISLAQTDSKHIS) is disordered. The span at 347-368 (EQDHGSSHKDTDAMKPEGKGME) shows a compositional bias: basic and acidic residues. Asn376 is a glycosylation site (N-linked (GlcNAc...) asparagine).

The protein belongs to the glycosyltransferase 31 family. Beta3-Gal-T subfamily. In terms of assembly, homodimer; disulfide-linked. Requires Mn(2+) as cofactor.

The protein resides in the membrane. The enzyme catalyses an N-acetyl-alpha-D-galactosaminyl derivative + UDP-alpha-D-galactose = a beta-D-galactosyl-(1-&gt;3)-N-acetyl-alpha-D-galactosaminyl derivative + UDP + H(+). The protein operates within protein modification; protein glycosylation. Functionally, glycosyltransferase that generates the core 1 O-glycan Gal-beta1-3GalNAc-alpha1-Ser/Thr (T antigen), which is a precursor for many extended O-glycans in glycoproteins. This is Glycoprotein-N-acetylgalactosamine 3-beta-galactosyltransferase 1 from Biomphalaria glabrata (Bloodfluke planorb).